Here is a 445-residue protein sequence, read N- to C-terminus: MKMKAKWLPIAAAVTAALASQAAFAVDFHGYFRSGVGVSTDGSMQTGLSDNAKQKVGRLGNEADTYGEIQLGSEVFNKDGKTFYVDSMVAMTSNGSNDWESTESKFQCTSANGTALDGCENKEDATFALRQFNVQAKGLLGFAPEATLWAGKRYYQRHDVHISDFYYWNISGAGAGIEGIQAGPGKVSFAWVRNDRSGTNDGWTYNDEMNVNTLDLRYAGIPLWQDGSLEVGVDYAIANPSDAQKDSANAQYKNAKDGVMLTAELTQGILGGFNKTVLQYGTEGYSKTFAFWGDGSWYGAEAKDGADGFRIINHGVIPMGNSWEMGHQLVYGVGNDMWDTNDKWETMSVVARPMYKWDDFNKTIFEGGYFKDKNKSTNGTSEEDAGYKLTLAQAWSAGSSFWARPEIRVFASYLAQDKKEMKGNAFNNGTADDTWNFGVQAEAWW.

Positions 1–25 (MKMKAKWLPIAAAVTAALASQAAFA) are cleaved as a signal peptide.

This sequence belongs to the porin LamB (TC 1.B.3) family. As to quaternary structure, homotrimer formed of three 18-stranded antiparallel beta-barrels, containing three independent channels.

It localises to the cell outer membrane. It catalyses the reaction beta-maltose(in) = beta-maltose(out). Functionally, involved in the transport of maltose and maltodextrins. The chain is Maltoporin 2 from Aeromonas salmonicida (strain A449).